The following is a 37-amino-acid chain: Cytochrome b6-f complex subunit 5 (37 aa).

Residues 5–25 (LLSGIVLGMITVSAFGLFVAA) form a helical membrane-spanning segment.

This sequence belongs to the PetG family. In terms of assembly, the 4 large subunits of the cytochrome b6-f complex are cytochrome b6, subunit IV (17 kDa polypeptide, PetD), cytochrome f and the Rieske protein, while the 4 small subunits are PetG, PetL, PetM and PetN. The complex functions as a dimer.

It is found in the plastid. The protein resides in the chloroplast thylakoid membrane. Component of the cytochrome b6-f complex, which mediates electron transfer between photosystem II (PSII) and photosystem I (PSI), cyclic electron flow around PSI, and state transitions. PetG is required for either the stability or assembly of the cytochrome b6-f complex. The sequence is that of Cytochrome b6-f complex subunit 5 from Thalassiosira pseudonana (Marine diatom).